A 273-amino-acid polypeptide reads, in one-letter code: Large ribosomal subunit protein uL2 (273 aa).

Disordered stretches follow at residues proline 32–histidine 53 and arginine 221–lysine 273. A compositionally biased stretch (low complexity) spans lysine 39–arginine 48.

Belongs to the universal ribosomal protein uL2 family. Part of the 50S ribosomal subunit. Forms a bridge to the 30S subunit in the 70S ribosome.

Functionally, one of the primary rRNA binding proteins. Required for association of the 30S and 50S subunits to form the 70S ribosome, for tRNA binding and peptide bond formation. It has been suggested to have peptidyltransferase activity; this is somewhat controversial. Makes several contacts with the 16S rRNA in the 70S ribosome. The chain is Large ribosomal subunit protein uL2 from Erwinia tasmaniensis (strain DSM 17950 / CFBP 7177 / CIP 109463 / NCPPB 4357 / Et1/99).